Consider the following 325-residue polypeptide: NADH-quinone oxidoreductase subunit H (325 aa).

The next 9 helical transmembrane spans lie at 11–31 (ILLS…CGAF), 50–69 (NRVG…KMFF), 81–101 (VIFT…FAIV), 114–134 (IGIL…LFAG), 154–174 (VSYE…AGSF), 186–206 (LWNV…GVAV), 237–257 (FFVG…TLFF), 265–285 (LPPF…FILI), and 304–324 (VCLP…LWQA).

Belongs to the complex I subunit 1 family. As to quaternary structure, NDH-1 is composed of 13 different subunits. Subunits NuoA, H, J, K, L, M, N constitute the membrane sector of the complex.

The protein resides in the cell inner membrane. The enzyme catalyses a quinone + NADH + 5 H(+)(in) = a quinol + NAD(+) + 4 H(+)(out). NDH-1 shuttles electrons from NADH, via FMN and iron-sulfur (Fe-S) centers, to quinones in the respiratory chain. The immediate electron acceptor for the enzyme in this species is believed to be ubiquinone. Couples the redox reaction to proton translocation (for every two electrons transferred, four hydrogen ions are translocated across the cytoplasmic membrane), and thus conserves the redox energy in a proton gradient. This subunit may bind ubiquinone. This is NADH-quinone oxidoreductase subunit H from Salmonella arizonae (strain ATCC BAA-731 / CDC346-86 / RSK2980).